Consider the following 425-residue polypeptide: 2-oxoglutarate and iron-dependent oxygenase JMJD4 homolog (425 aa).

Residues 165-316 (AAQMPGYNFY…MVWQNLKNNL (152 aa)) form the JmjC domain. His212, Asp214, and His284 together coordinate Fe cation.

Belongs to the JMJD6 family. Fe(2+) is required as a cofactor.

It localises to the nucleus. Its subcellular location is the cytoplasm. It carries out the reaction L-lysyl-[protein] + 2-oxoglutarate + O2 = 4-hydroxy-L-lysyl-[protein] + succinate + CO2. Catalyzes the 2-oxoglutarate and iron-dependent C4-lysyl hydroxylation of eRF1 thereby promoting the translational termination efficiency of eRF1. May be involved in regulation of chromatin structure, promoting expansion of heterochromatin. This is 2-oxoglutarate and iron-dependent oxygenase JMJD4 homolog from Drosophila melanogaster (Fruit fly).